Reading from the N-terminus, the 106-residue chain is Protein U4 (106 aa).

A helical membrane pass occupies residues 5-25 (FFISIILFVVLLNPSLIINMV).

It belongs to the nanovirus U4 protein family.

The protein resides in the membrane. This chain is Protein U4 (DNA-U4), found in Cicer arietinum (Chickpea).